A 364-amino-acid polypeptide reads, in one-letter code: N-acetyl-gamma-glutamyl-phosphate reductase (364 aa).

Cysteine 157 is an active-site residue.

This sequence belongs to the NAGSA dehydrogenase family. Type 1 subfamily.

Its subcellular location is the cytoplasm. It catalyses the reaction N-acetyl-L-glutamate 5-semialdehyde + phosphate + NADP(+) = N-acetyl-L-glutamyl 5-phosphate + NADPH + H(+). It functions in the pathway amino-acid biosynthesis; L-arginine biosynthesis; N(2)-acetyl-L-ornithine from L-glutamate: step 3/4. Its function is as follows. Catalyzes the NADPH-dependent reduction of N-acetyl-5-glutamyl phosphate to yield N-acetyl-L-glutamate 5-semialdehyde. The sequence is that of N-acetyl-gamma-glutamyl-phosphate reductase from Bifidobacterium longum (strain NCC 2705).